A 917-amino-acid polypeptide reads, in one-letter code: Protein FAN (917 aa).

The region spanning 176-247 (RLARTSFDKN…QDVRRIYKRR (72 aa)) is the GRAM domain. A BEACH-type PH domain is found at 189–286 (NISEKLHMEC…DRDDLYFYIA (98 aa)). One can recognise a BEACH domain in the interval 290–575 (EHHVAEHTAE…QLFVTPHPRR (286 aa)). WD repeat units lie at residues 628–658 (IHKE…KMFS), 670–700 (FSNM…YFYS), 712–740 (GHDD…KVWS), 761–791 (EHDV…NIWD), 803–833 (CHSG…NVID), and 884–914 (GHTG…IFWK).

In terms of tissue distribution, ubiquitous.

Its function is as follows. Couples the p55 TNF-receptor (TNF-R55 / TNFR1) to neutral sphingomyelinase (N-SMASE). Specifically binds to the N-smase activation domain of TNF-R55. May regulate ceramide production by N-SMASE. The polypeptide is Protein FAN (NSMAF) (Homo sapiens (Human)).